A 364-amino-acid polypeptide reads, in one-letter code: Dihydroorotate dehydrogenase (quinone) (364 aa).

FMN is bound by residues 62 to 66 (AGFDK) and T86. Residue K66 participates in substrate binding. Position 111-115 (111-115 (NRMGF)) interacts with substrate. 2 residues coordinate FMN: N142 and N175. Substrate is bound at residue N175. Catalysis depends on S178, which acts as the Nucleophile. N180 contributes to the substrate binding site. Residues K216 and T244 each coordinate FMN. 245–246 (NT) is a binding site for substrate. FMN is bound by residues G267, G296, and 317 to 318 (YT).

This sequence belongs to the dihydroorotate dehydrogenase family. Type 2 subfamily. In terms of assembly, monomer. The cofactor is FMN.

The protein localises to the cell membrane. The enzyme catalyses (S)-dihydroorotate + a quinone = orotate + a quinol. It functions in the pathway pyrimidine metabolism; UMP biosynthesis via de novo pathway; orotate from (S)-dihydroorotate (quinone route): step 1/1. In terms of biological role, catalyzes the conversion of dihydroorotate to orotate with quinone as electron acceptor. The sequence is that of Dihydroorotate dehydrogenase (quinone) from Anaeromyxobacter dehalogenans (strain 2CP-1 / ATCC BAA-258).